The chain runs to 542 residues: Chaperonin GroEL 3 (542 aa).

ATP-binding positions include 30 to 33 (TLGP), Lys-51, 87 to 91 (DGTTT), Gly-415, and Asp-494. Residues 523–542 (KPKKKEPPMPAMPSDMGDYD) are disordered.

Belongs to the chaperonin (HSP60) family. In terms of assembly, forms a cylinder of 14 subunits composed of two heptameric rings stacked back-to-back. Interacts with the co-chaperonin GroES.

The protein localises to the cytoplasm. It catalyses the reaction ATP + H2O + a folded polypeptide = ADP + phosphate + an unfolded polypeptide.. Together with its co-chaperonin GroES, plays an essential role in assisting protein folding. The GroEL-GroES system forms a nano-cage that allows encapsulation of the non-native substrate proteins and provides a physical environment optimized to promote and accelerate protein folding. The chain is Chaperonin GroEL 3 from Syntrophus aciditrophicus (strain SB).